A 307-amino-acid polypeptide reads, in one-letter code: tRNA dimethylallyltransferase 1 (307 aa).

Residue 10–17 coordinates ATP; that stretch reads GPTASGKT. 12–17 serves as a coordination point for substrate; the sequence is TASGKT. The tract at residues 35-38 is interaction with substrate tRNA; the sequence is DSRQ.

The protein belongs to the IPP transferase family. As to quaternary structure, monomer. Requires Mg(2+) as cofactor.

It catalyses the reaction adenosine(37) in tRNA + dimethylallyl diphosphate = N(6)-dimethylallyladenosine(37) in tRNA + diphosphate. Catalyzes the transfer of a dimethylallyl group onto the adenine at position 37 in tRNAs that read codons beginning with uridine, leading to the formation of N6-(dimethylallyl)adenosine (i(6)A). The polypeptide is tRNA dimethylallyltransferase 1 (Geotalea daltonii (strain DSM 22248 / JCM 15807 / FRC-32) (Geobacter daltonii)).